Reading from the N-terminus, the 117-residue chain is DNA-binding protein RdgB (117 aa).

The segment at residues Asn-82–Arg-102 is a DNA-binding region (H-T-H motif).

It belongs to the c/mor transcriptional regulatory family.

Its function is as follows. Regulates pectin lyase production in response to DNA damage. This is DNA-binding protein RdgB (rdgB) from Pectobacterium carotovorum subsp. carotovorum (Erwinia carotovora subsp. carotovora).